The following is a 357-amino-acid chain: G-protein coupled receptor 183 (357 aa).

The Extracellular segment spans residues 1–27; the sequence is MANNFTTPLATSHGNNCDLYAHHSTAR. N-linked (GlcNAc...) asparagine glycosylation occurs at Asn4. Residues 28–53 traverse the membrane as a helical segment; that stretch reads VLMPLHYSLVFIIGLVGNLLALVVIV. The Cytoplasmic segment spans residues 54-73; the sequence is QNRKKINSTTLYSMNLVISD. Residues 74 to 91 traverse the membrane as a helical segment; that stretch reads ILFTTALPTRIAYYALGF. Arg83 lines the 7alpha,25-dihydroxycholesterol pocket. At 92–101 the chain is on the extracellular side; sequence DWRIGDALCR. A disulfide bridge connects residues Cys100 and Cys177. Residues 102-123 traverse the membrane as a helical segment; it reads VTALVFYINTYAGVNFMTCLSI. The 7alpha,25-dihydroxycholesterol site is built by Tyr108 and Tyr112. The interval 122–130 is interaction with G proteins; sequence SIDRFFAVV. At 124–145 the chain is on the cytoplasmic side; sequence DRFFAVVHPLRYNKIKRIEYAK. The helical transmembrane segment at 146–164 threads the bilayer; that stretch reads GVCLSVWILVFAQTLPLLL. Residues 165–188 lie on the Extracellular side of the membrane; it reads TPMSKEEGDKTTCMEYPNFEGTAS. The chain crosses the membrane as a helical span at residues 189 to 211; it reads LPWILLGACLLGYVLPITVILLC. The Cytoplasmic segment spans residues 212 to 237; the sequence is YSQICCKLFRTAKQNPLTEKSGVNKK. The helical transmembrane segment at 238 to 261 threads the bilayer; it reads ALNTIILIIVVFILCFTPYHVAII. Tyr256 provides a ligand contact to 7alpha,25-dihydroxycholesterol. At 262–283 the chain is on the extracellular side; it reads QHMIKMLCSPGALECGARHSFQ. The helical transmembrane segment at 284–308 threads the bilayer; that stretch reads ISLHFTVCLMNFNCCMDPFIYFFAC. Over 309-357 the chain is Cytoplasmic; the sequence is KGYKRKVMKMLKRQVSVSISSAVRSAPEENSREMTESQMMIHSKASNGR. Ser324 and Ser345 each carry phosphoserine. Positions 336–357 are disordered; it reads EENSREMTESQMMIHSKASNGR. The span at 344–357 shows a compositional bias: polar residues; it reads ESQMMIHSKASNGR.

The protein belongs to the G-protein coupled receptor 1 family. Homodimer and heterodimer. Heterodimerizes with CXCR5; leading to modulate the interaction between of CXCL13 and CXCR5. In terms of tissue distribution, expressed in mature B-cells and increases in expression early after activation, before being down-regulated in germinal center B-cells. Expressed in astrocytes. Specifically expressed in CD4(+) dendritic cells but not in CD8(+) dendritic cells. Expressed in monocyte/osteoclasts precursors and mature osteoclasts.

It is found in the cell membrane. G-protein coupled receptor expressed in lymphocytes that acts as a chemotactic receptor for B-cells, T-cells, splenic dendritic cells, monocytes/macrophages and astrocytes. Receptor for oxysterol 7-alpha,25-dihydroxycholesterol (7-alpha,25-OHC) and other related oxysterols. Mediates cell positioning and movement of a number of cells by binding the 7-alpha,25-OHC ligand that forms a chemotactic gradient. Binding of 7-alpha,25-OHC mediates the correct localization of B-cells during humoral immune responses. Collaborates with CXCR5 to mediate B-cell migration; probably by forming a heterodimer with CXCR5 that affects the interaction between of CXCL13 and CXCR5. Guides B-cell movement along the B-cell zone-T-cell zone boundary and later to interfollicular and outer follicular regions. Its specific expression during B-cell maturation helps position B-cells appropriately for mounting T-dependent antibody responses. Also acts as a chemotactic receptor for some T-cells upon binding to 7-alpha,25-OHC ligand. Promotes follicular helper T (Tfh) cells differentiation by positioning activated T-cells at the follicle-T-zone interface, promoting contact of newly activated CD4 T-cells with activated dendritic cells and exposing them to Tfh-cell-promoting inducible costimulator (ICOS) ligand. Expression in splenic dendritic cells is required for their homeostasis, localization and ability to induce B- and T-cell responses: GPR183 acts as a chemotactic receptor in dendritic cells that mediates the accumulation of CD4(+) dendritic cells in bridging channels. Regulates migration of astrocytes and is involved in communication between astrocytes and macrophages. Promotes osteoclast precursor migration to bone surfaces. Signals constitutively through G(i)-alpha, but not G(s)-alpha or G(q)-alpha. Signals constitutively also via MAPK1/3 (ERK1/2). The chain is G-protein coupled receptor 183 from Mus musculus (Mouse).